An 88-amino-acid chain; its full sequence is UPF0250 protein Shal_3239 (88 aa).

Belongs to the UPF0250 family.

This is UPF0250 protein Shal_3239 from Shewanella halifaxensis (strain HAW-EB4).